The chain runs to 225 residues: Cytochrome c oxidase subunit 2 (225 aa).

At 1–26 the chain is on the mitochondrial intermembrane side; it reads MMTWSQMSFSDMNSPIMEQMVFFHDH. Residues 27–48 form a helical membrane-spanning segment; it reads SMMIILMITILTIYMITNIMMN. Residues 49-62 are Mitochondrial matrix-facing; the sequence is NLLSRSMMEGQEIE. The chain crosses the membrane as a helical span at residues 63–82; the sequence is IIWTIIPAITLIFIAIPSLH. Residues 83-225 are Mitochondrial intermembrane-facing; that stretch reads LLYLTDETFN…KNFINFINSS (143 aa). His-160, Cys-195, Glu-197, Cys-199, His-203, and Met-206 together coordinate Cu cation. Glu-197 lines the Mg(2+) pocket.

Belongs to the cytochrome c oxidase subunit 2 family. As to quaternary structure, component of the cytochrome c oxidase (complex IV, CIV), a multisubunit enzyme composed of a catalytic core of 3 subunits and several supernumerary subunits. The complex exists as a monomer or a dimer and forms supercomplexes (SCs) in the inner mitochondrial membrane with ubiquinol-cytochrome c oxidoreductase (cytochrome b-c1 complex, complex III, CIII). Requires Cu cation as cofactor.

Its subcellular location is the mitochondrion inner membrane. It catalyses the reaction 4 Fe(II)-[cytochrome c] + O2 + 8 H(+)(in) = 4 Fe(III)-[cytochrome c] + 2 H2O + 4 H(+)(out). Functionally, component of the cytochrome c oxidase, the last enzyme in the mitochondrial electron transport chain which drives oxidative phosphorylation. The respiratory chain contains 3 multisubunit complexes succinate dehydrogenase (complex II, CII), ubiquinol-cytochrome c oxidoreductase (cytochrome b-c1 complex, complex III, CIII) and cytochrome c oxidase (complex IV, CIV), that cooperate to transfer electrons derived from NADH and succinate to molecular oxygen, creating an electrochemical gradient over the inner membrane that drives transmembrane transport and the ATP synthase. Cytochrome c oxidase is the component of the respiratory chain that catalyzes the reduction of oxygen to water. Electrons originating from reduced cytochrome c in the intermembrane space (IMS) are transferred via the dinuclear copper A center (CU(A)) of subunit 2 and heme A of subunit 1 to the active site in subunit 1, a binuclear center (BNC) formed by heme A3 and copper B (CU(B)). The BNC reduces molecular oxygen to 2 water molecules using 4 electrons from cytochrome c in the IMS and 4 protons from the mitochondrial matrix. The polypeptide is Cytochrome c oxidase subunit 2 (COII) (Rhipicephalus sanguineus (Brown dog tick)).